A 362-amino-acid chain; its full sequence is Putative sphingolipid delta(4)-desaturase/C4-monooxygenase (362 aa).

3 helical membrane-spanning segments follow: residues 45 to 61, 71 to 91, and 107 to 127; these read YVVS…CWLL, LEAY…IHDI, and FFGM…FKKY. Residues 89 to 93 carry the Histidine box-1 motif; that stretch reads HDISH. The Histidine box-2 motif lies at 128–132; it reads HVEHH. 2 consecutive transmembrane segments (helical) span residues 160-177 and 198-218; these read LLWL…PLII and LLIL…GTII. Positions 259 to 263 match the Histidine box-3 motif; sequence HVEHH.

It belongs to the fatty acid desaturase type 1 family. DEGS subfamily.

Its subcellular location is the membrane. It catalyses the reaction an N-acyl-15-methylhexadecasphinganine + 2 Fe(II)-[cytochrome b5] + O2 + 2 H(+) = an N-acyl-4-hydroxy-15-methylhexadecasphinganine + 2 Fe(III)-[cytochrome b5] + H2O. The catalysed reaction is an N-acyl-15-methylhexadecasphinganine + 2 Fe(II)-[cytochrome b5] + O2 + 2 H(+) = an N-acyl-15-methylhexadecasphing-4-enine + 2 Fe(III)-[cytochrome b5] + 2 H2O. It carries out the reaction a dihydroceramide + 2 Fe(II)-[cytochrome b5] + O2 + 2 H(+) = a phytoceramide + 2 Fe(III)-[cytochrome b5] + H2O. The enzyme catalyses an N-acylsphinganine + 2 Fe(II)-[cytochrome b5] + O2 + 2 H(+) = an N-acylsphing-4-enine + 2 Fe(III)-[cytochrome b5] + 2 H2O. It catalyses the reaction N-octanoylsphinganine + 2 Fe(II)-[cytochrome b5] + O2 + 2 H(+) = N-octanoyl-4-hydroxysphinganine + 2 Fe(III)-[cytochrome b5] + H2O. The catalysed reaction is an N-acylsphinganine + 2 Fe(II)-[cytochrome b5] + O2 + 2 H(+) = an N-acyl-(4R)-4-hydroxysphinganine + 2 Fe(III)-[cytochrome b5] + H2O. It participates in lipid metabolism; sphingolipid metabolism. Functionally, bifunctional enzyme which acts both as a sphingolipid delta(4)-desaturase and a sphingolipid C4-monooxygenase. C.elegans contain specific sphingoid bases, which are unique or different in structure compared to the sphingoid bases found in other animals. Two examples of these distinctive compounds are: 15-methylhexadecasphinganine and 15-methylhexadecasphing-4-enine and this enzyme can catalyze their conversion. The protein is Putative sphingolipid delta(4)-desaturase/C4-monooxygenase (ttm-5) of Caenorhabditis elegans.